Here is a 409-residue protein sequence, read N- to C-terminus: uncharacterized protein (409 aa).

An HTH arsR-type domain is found at 305 to 409 (LTKIDEKVVK…LIGEDDELEM (105 aa)).

This is an uncharacterized protein from Methanocaldococcus jannaschii (strain ATCC 43067 / DSM 2661 / JAL-1 / JCM 10045 / NBRC 100440) (Methanococcus jannaschii).